Reading from the N-terminus, the 321-residue chain is DNA-directed RNA polymerase subunit alpha (321 aa).

The alpha N-terminal domain (alpha-NTD) stretch occupies residues 1 to 235 (MAYQIECLET…DLFSPLKEVP (235 aa)). The interval 252 to 321 (QIPIEQLNLS…TLPPQKAARN (70 aa)) is alpha C-terminal domain (alpha-CTD).

It belongs to the RNA polymerase alpha chain family. In terms of assembly, homodimer. In cyanobacteria the RNAP catalytic core is composed of 2 alpha, 1 beta, 1 beta', 1 gamma and 1 omega subunit. When a sigma factor is associated with the core the holoenzyme is formed, which can initiate transcription.

The enzyme catalyses RNA(n) + a ribonucleoside 5'-triphosphate = RNA(n+1) + diphosphate. Its function is as follows. DNA-dependent RNA polymerase catalyzes the transcription of DNA into RNA using the four ribonucleoside triphosphates as substrates. The sequence is that of DNA-directed RNA polymerase subunit alpha from Thermosynechococcus vestitus (strain NIES-2133 / IAM M-273 / BP-1).